Consider the following 243-residue polypeptide: Ribosomal RNA small subunit methyltransferase J (243 aa).

S-adenosyl-L-methionine contacts are provided by residues glutamate 112–arginine 113 and aspartate 164.

It belongs to the methyltransferase superfamily. RsmJ family.

It is found in the cytoplasm. The enzyme catalyses guanosine(1516) in 16S rRNA + S-adenosyl-L-methionine = N(2)-methylguanosine(1516) in 16S rRNA + S-adenosyl-L-homocysteine + H(+). Functionally, specifically methylates the guanosine in position 1516 of 16S rRNA. The protein is Ribosomal RNA small subunit methyltransferase J of Legionella pneumophila (strain Corby).